We begin with the raw amino-acid sequence, 333 residues long: Anthranilate phosphoribosyltransferase (333 aa).

Residues Gly-81, 84-85 (GD), Thr-89, 91-94 (NIST), 109-117 (KHGNRSVSS), and Ser-121 each bind 5-phospho-alpha-D-ribose 1-diphosphate. An anthranilate-binding site is contributed by Gly-81. Ser-93 contacts Mg(2+). Anthranilate is bound at residue Asn-112. Arg-167 is an anthranilate binding site. 2 residues coordinate Mg(2+): Asp-225 and Glu-226.

It belongs to the anthranilate phosphoribosyltransferase family. Homodimer. Requires Mg(2+) as cofactor.

The enzyme catalyses N-(5-phospho-beta-D-ribosyl)anthranilate + diphosphate = 5-phospho-alpha-D-ribose 1-diphosphate + anthranilate. It functions in the pathway amino-acid biosynthesis; L-tryptophan biosynthesis; L-tryptophan from chorismate: step 2/5. Its function is as follows. Catalyzes the transfer of the phosphoribosyl group of 5-phosphorylribose-1-pyrophosphate (PRPP) to anthranilate to yield N-(5'-phosphoribosyl)-anthranilate (PRA). The protein is Anthranilate phosphoribosyltransferase of Glaesserella parasuis serovar 5 (strain SH0165) (Haemophilus parasuis).